A 570-amino-acid polypeptide reads, in one-letter code: MAQSKEVPSFRWTQSLRKGLSQFTQTVKSDILKDAKLIADSIDFNQVAQVQRVLRKTKRTDDDLNKLRDLNIEVDRLMSMKSVQKNTIFKVGDLARDELMELASDLEKLKDKIKRTESNGTNAYMGNLPQSQLNRRSEILRTLGFAQQGGRPNGIVRVWDVKDSSKLNNQFGSMPALTIACMTVQGGETMNNVVQALTSLGLLYTVKYPNLSDLDKLIPNHECLQIITKEESSINISGYNLSLLAAVKAGASILDGGNMLETIRVSPDNFSSLIKNTLQVKRREGMFIDDRPGSRNPYENLLYKLCLSGDGWPYIGSRSQIMGRSWDNTSVDLTKKPDAVPEPGAAPRPAERKGQNLRLASLTEGQELIVRAAISELDPSNTIWLDIEDLQLDPVELALYQPAKKQYIHCFRKPHDEKGFKNGSRHSHGILMKDIEDAVPGVLSYVIGLLPPNMVITTQGSDDIRKLLDIHGRKDLKLIDVKFTSDQARLFEHQVWDKFGHLCKQHNGVIISKKNKSKDSPPSPSPDEPHCALLDCIMFHSAVSGELPKEEPIPLLPKEFLFFPKTAFAL.

A binding site for the cap structure m7GTP region spans residues 54-236; sequence LRKTKRTDDD…ITKEESSINI (183 aa). Residues 332 to 356 form a disordered region; sequence DLTKKPDAVPEPGAAPRPAERKGQN. Asp386 and Glu388 together coordinate Mg(2+). Mn(2+)-binding residues include Asp386 and Glu388. 4 residues coordinate Zn(2+): Glu396, Cys503, His506, and Cys531. Mg(2+) is bound at residue Asp535. Asp535 serves as a coordination point for Mn(2+).

The protein belongs to the arenaviridae nucleocapsid protein family. As to quaternary structure, homomultimerizes to form the nucleocapsid. Binds to viral genomic RNA. Interacts with glycoprotein G2. Interacts with protein Z; this interaction probably directs the encapsidated genome to budding sites. Interacts with protein L; this interaction does not interfere with Z-L interaction. Interacts with host IKBKE (via Protein kinase domain); the interaction inhibits IKBKE kinase activity.

The protein localises to the virion. The protein resides in the host cytoplasm. Functionally, encapsidates the genome, protecting it from nucleases. The encapsidated genomic RNA is termed the nucleocapsid (NC). Serves as template for viral transcription and replication. The increased presence of protein N in host cell does not seem to trigger the switch from transcription to replication as observed in other negative strain RNA viruses. Through the interaction with host IKBKE, strongly inhibits the phosphorylation and nuclear translocation of host IRF3, a protein involved in interferon activation pathway, leading to the inhibition of interferon-beta and IRF3-dependent promoters activation. Also encodes a functional 3'-5' exoribonuclease that degrades preferentially dsRNA substrates and thereby participates in the suppression of interferon induction. The protein is Nucleoprotein of Artibeus (neotropical fruit bats).